The following is a 182-amino-acid chain: ATP synthase subunit b, chloroplastic (182 aa).

The helical transmembrane segment at 31–53 (IINISVVLGVLVYFGKGVLSNLL) threads the bilayer.

This sequence belongs to the ATPase B chain family. F-type ATPases have 2 components, F(1) - the catalytic core - and F(0) - the membrane proton channel. F(1) has five subunits: alpha(3), beta(3), gamma(1), delta(1), epsilon(1). F(0) has four main subunits: a(1), b(1), b'(1) and c(10-14). The alpha and beta chains form an alternating ring which encloses part of the gamma chain. F(1) is attached to F(0) by a central stalk formed by the gamma and epsilon chains, while a peripheral stalk is formed by the delta, b and b' chains.

The protein resides in the plastid. It localises to the chloroplast thylakoid membrane. Its function is as follows. F(1)F(0) ATP synthase produces ATP from ADP in the presence of a proton or sodium gradient. F-type ATPases consist of two structural domains, F(1) containing the extramembraneous catalytic core and F(0) containing the membrane proton channel, linked together by a central stalk and a peripheral stalk. During catalysis, ATP synthesis in the catalytic domain of F(1) is coupled via a rotary mechanism of the central stalk subunits to proton translocation. Component of the F(0) channel, it forms part of the peripheral stalk, linking F(1) to F(0). The polypeptide is ATP synthase subunit b, chloroplastic (Welwitschia mirabilis (Tree tumbo)).